The sequence spans 105 residues: Small ribosomal subunit protein eS25 (105 aa).

Belongs to the eukaryotic ribosomal protein eS25 family. In terms of assembly, component of the small ribosomal subunit. Mature ribosomes consist of a small (40S) and a large (60S) subunit. The 40S subunit contains about 32 different proteins and 1 molecule of RNA (18S). The 60S subunit contains 45 different proteins and 3 molecules of RNA (25S, 5.8S and 5S).

It localises to the cytoplasm. In terms of biological role, component of the ribosome, a large ribonucleoprotein complex responsible for the synthesis of proteins in the cell. The small ribosomal subunit (SSU) binds messenger RNAs (mRNAs) and translates the encoded message by selecting cognate aminoacyl-transfer RNA (tRNA) molecules. The large subunit (LSU) contains the ribosomal catalytic site termed the peptidyl transferase center (PTC), which catalyzes the formation of peptide bonds, thereby polymerizing the amino acids delivered by tRNAs into a polypeptide chain. The nascent polypeptides leave the ribosome through a tunnel in the LSU and interact with protein factors that function in enzymatic processing, targeting, and the membrane insertion of nascent chains at the exit of the ribosomal tunnel. In Candida albicans (strain SC5314 / ATCC MYA-2876) (Yeast), this protein is Small ribosomal subunit protein eS25 (RPS25B).